We begin with the raw amino-acid sequence, 456 residues long: Putative sodium-coupled neutral amino acid transporter 11 (456 aa).

The segment at 1-25 (MRAGPRRQHLLPPQDNRAAVGYQRQ) is disordered. A helical membrane pass occupies residues 58–78 (FNVVNSIIGSGIIDFSLILLI). The N-linked (GlcNAc...) asparagine glycan is linked to asparagine 94. 6 consecutive transmembrane segments (helical) span residues 98–118 (GFPG…IAMI), 143–163 (VFIG…LPLS), 171–191 (LGKV…IVMA), 206–226 (AWVF…FAFI), 252–272 (MSIV…YLTF), and 291–313 (VTFG…CFVT). An N-linked (GlcNAc...) asparagine glycan is attached at asparagine 325. 3 helical membrane-spanning segments follow: residues 329-349 (VFHI…SLLI), 351-371 (CLGI…IFII), and 390-410 (IMSY…FVMA).

Belongs to the amino acid/polyamine transporter 2 family.

It localises to the membrane. Putative sodium-dependent amino acid/proton antiporter. This is Putative sodium-coupled neutral amino acid transporter 11 (SLC38A11) from Macaca fascicularis (Crab-eating macaque).